A 347-amino-acid polypeptide reads, in one-letter code: MSVMFDPQAAIYPFPPKPTPLSDDEKQFYREKIKRLLKERNAVMVAHYYTDPEIQQLAEETGGCISDSLEMARFGAKHAASTLLVAGVRFMGETAKILSPEKTILMPTLAAECSLDLGCPIDEFSAFCDAHPDRTVVVYANTSAAVKARADWVVTSSIAVELIEHLDSLGEKIIWAPDRHLGNYVQKQTGADVLCWQGACIVHDEFKTQALTRLKKIYPDAALLVHPESPQSIVEMADAVGSTSQLIKAAKTLPHRQLIVATDRGIFYKMQQAVPEKELLEAPTAGEGATCRSCAHCPWMAMNGLKAIAEGLEQGGAAHEIQVDAALREGALLPLNRMLDFAATLRA.

The iminosuccinate site is built by His-47 and Ser-68. Cys-113 serves as a coordination point for [4Fe-4S] cluster. Residues 139–141 (YAN) and Ser-156 contribute to the iminosuccinate site. [4Fe-4S] cluster is bound at residue Cys-200. Iminosuccinate contacts are provided by residues 226-228 (HPE) and Thr-243. Cys-297 contacts [4Fe-4S] cluster.

Belongs to the quinolinate synthase family. Type 1 subfamily. [4Fe-4S] cluster is required as a cofactor.

Its subcellular location is the cytoplasm. It carries out the reaction iminosuccinate + dihydroxyacetone phosphate = quinolinate + phosphate + 2 H2O + H(+). The protein operates within cofactor biosynthesis; NAD(+) biosynthesis; quinolinate from iminoaspartate: step 1/1. Functionally, catalyzes the condensation of iminoaspartate with dihydroxyacetone phosphate to form quinolinate. In Salmonella choleraesuis (strain SC-B67), this protein is Quinolinate synthase.